Here is a 249-residue protein sequence, read N- to C-terminus: 1-(5-phosphoribosyl)-5-[(5-phosphoribosylamino)methylideneamino] imidazole-4-carboxamide isomerase (249 aa).

Asp10 functions as the Proton acceptor in the catalytic mechanism. Catalysis depends on Asp136, which acts as the Proton donor.

It belongs to the HisA/HisF family.

The protein localises to the cytoplasm. The enzyme catalyses 1-(5-phospho-beta-D-ribosyl)-5-[(5-phospho-beta-D-ribosylamino)methylideneamino]imidazole-4-carboxamide = 5-[(5-phospho-1-deoxy-D-ribulos-1-ylimino)methylamino]-1-(5-phospho-beta-D-ribosyl)imidazole-4-carboxamide. Its pathway is amino-acid biosynthesis; L-histidine biosynthesis; L-histidine from 5-phospho-alpha-D-ribose 1-diphosphate: step 4/9. This is 1-(5-phosphoribosyl)-5-[(5-phosphoribosylamino)methylideneamino] imidazole-4-carboxamide isomerase from Symbiobacterium thermophilum (strain DSM 24528 / JCM 14929 / IAM 14863 / T).